The chain runs to 82 residues: Defensin-like protein 208 (82 aa).

The N-terminal stretch at 1–29 (MAKNLNTVSFTVLLLVLLMASTGILETEA) is a signal peptide. Cystine bridges form between Cys-38–Cys-63, Cys-50–Cys-76, and Cys-54–Cys-78.

It belongs to the DEFL family.

The protein resides in the secreted. In Arabidopsis thaliana (Mouse-ear cress), this protein is Defensin-like protein 208.